Here is a 364-residue protein sequence, read N- to C-terminus: Aminomethyltransferase (364 aa).

This sequence belongs to the GcvT family. As to quaternary structure, the glycine cleavage system is composed of four proteins: P, T, L and H.

The enzyme catalyses N(6)-[(R)-S(8)-aminomethyldihydrolipoyl]-L-lysyl-[protein] + (6S)-5,6,7,8-tetrahydrofolate = N(6)-[(R)-dihydrolipoyl]-L-lysyl-[protein] + (6R)-5,10-methylene-5,6,7,8-tetrahydrofolate + NH4(+). Functionally, the glycine cleavage system catalyzes the degradation of glycine. The sequence is that of Aminomethyltransferase from Thermotoga maritima (strain ATCC 43589 / DSM 3109 / JCM 10099 / NBRC 100826 / MSB8).